A 95-amino-acid polypeptide reads, in one-letter code: MSFKPLHDRIAIKPIEHEEKTKGGIIIPDTAKEKPMQGIITAVGTGTRNEKGEVYPLELKVGDKVLYGKWAGTEIEIKGEKLIVMKENDVLGIIN.

The protein belongs to the GroES chaperonin family. Heptamer of 7 subunits arranged in a ring. Interacts with the chaperonin GroEL.

It localises to the cytoplasm. Together with the chaperonin GroEL, plays an essential role in assisting protein folding. The GroEL-GroES system forms a nano-cage that allows encapsulation of the non-native substrate proteins and provides a physical environment optimized to promote and accelerate protein folding. GroES binds to the apical surface of the GroEL ring, thereby capping the opening of the GroEL channel. The polypeptide is Co-chaperonin GroES (Rickettsia canadensis (strain McKiel)).